Reading from the N-terminus, the 244-residue chain is Ribosomal RNA small subunit methyltransferase G (244 aa).

Residues Gly79, Phe84, 102–104 (DST), 130–131 (AE), and Arg149 contribute to the S-adenosyl-L-methionine site. The tract at residues 225-244 (DRYPRREGVPNQQPLFWSAK) is disordered. Positions 234-244 (PNQQPLFWSAK) are enriched in polar residues.

It belongs to the methyltransferase superfamily. RNA methyltransferase RsmG family.

It is found in the cytoplasm. In terms of biological role, specifically methylates the N7 position of a guanine in 16S rRNA. This chain is Ribosomal RNA small subunit methyltransferase G, found in Deinococcus deserti (strain DSM 17065 / CIP 109153 / LMG 22923 / VCD115).